We begin with the raw amino-acid sequence, 325 residues long: tRNA dimethylallyltransferase (325 aa).

25–32 (GNTGSGKS) is a binding site for ATP. A substrate-binding site is contributed by 27–32 (TGSGKS). The interval 50-53 (DSRQ) is interaction with substrate tRNA.

This sequence belongs to the IPP transferase family. Monomer. Mg(2+) is required as a cofactor.

It carries out the reaction adenosine(37) in tRNA + dimethylallyl diphosphate = N(6)-dimethylallyladenosine(37) in tRNA + diphosphate. Functionally, catalyzes the transfer of a dimethylallyl group onto the adenine at position 37 in tRNAs that read codons beginning with uridine, leading to the formation of N6-(dimethylallyl)adenosine (i(6)A). This is tRNA dimethylallyltransferase from Dehalococcoides mccartyi (strain ATCC BAA-2266 / KCTC 15142 / 195) (Dehalococcoides ethenogenes (strain 195)).